The following is a 252-amino-acid chain: Isoprenyl transferase (252 aa).

The active site involves Asp-32. Asp-32 provides a ligand contact to Mg(2+). Substrate-binding positions include 33–36 (GNGR), Trp-37, Arg-45, His-49, and 77–79 (STE). The Proton acceptor role is filled by Asn-80. Residues Trp-81, Arg-83, Arg-200, and 206-208 (RLS) each bind substrate. Glu-219 is a Mg(2+) binding site.

This sequence belongs to the UPP synthase family. Homodimer. Mg(2+) serves as cofactor.

Catalyzes the condensation of isopentenyl diphosphate (IPP) with allylic pyrophosphates generating different type of terpenoids. This is Isoprenyl transferase from Listeria monocytogenes serotype 4b (strain F2365).